The primary structure comprises 187 residues: Adenylate kinase (187 aa).

An ATP-binding site is contributed by 10-15 (GSGKGT). Residues 30–59 (STGDLLRSEVVAGTPLGLQAKQVMAQGDLV) are NMP. Residues Thr-31, Arg-36, 57-59 (DLV), 85-88 (GYPR), and Gln-92 each bind AMP. Residues 126–136 (GRAQAEGREDD) form an LID region. Arg-127 contributes to the ATP binding site. AMP contacts are provided by Arg-133 and Arg-144. Gly-172 lines the ATP pocket.

Belongs to the adenylate kinase family. As to quaternary structure, monomer.

It is found in the cytoplasm. It carries out the reaction AMP + ATP = 2 ADP. The protein operates within purine metabolism; AMP biosynthesis via salvage pathway; AMP from ADP: step 1/1. In terms of biological role, catalyzes the reversible transfer of the terminal phosphate group between ATP and AMP. Plays an important role in cellular energy homeostasis and in adenine nucleotide metabolism. In Xylella fastidiosa (strain M12), this protein is Adenylate kinase.